A 521-amino-acid chain; its full sequence is Lysine--tRNA ligase (521 aa).

The 'HIGH' region motif lies at 32–40 (PSGTVHIGN). A 'KMSKS' region motif is present at residues 280 to 284 (KISSS).

Belongs to the class-I aminoacyl-tRNA synthetase family.

It localises to the cytoplasm. It carries out the reaction tRNA(Lys) + L-lysine + ATP = L-lysyl-tRNA(Lys) + AMP + diphosphate. The polypeptide is Lysine--tRNA ligase (Borrelia garinii subsp. bavariensis (strain ATCC BAA-2496 / DSM 23469 / PBi) (Borreliella bavariensis)).